The following is a 284-amino-acid chain: Bifunctional protein FolD (284 aa).

NADP(+) is bound by residues 166-168 (GAS) and I232.

This sequence belongs to the tetrahydrofolate dehydrogenase/cyclohydrolase family. As to quaternary structure, homodimer.

It catalyses the reaction (6R)-5,10-methylene-5,6,7,8-tetrahydrofolate + NADP(+) = (6R)-5,10-methenyltetrahydrofolate + NADPH. The enzyme catalyses (6R)-5,10-methenyltetrahydrofolate + H2O = (6R)-10-formyltetrahydrofolate + H(+). The protein operates within one-carbon metabolism; tetrahydrofolate interconversion. In terms of biological role, catalyzes the oxidation of 5,10-methylenetetrahydrofolate to 5,10-methenyltetrahydrofolate and then the hydrolysis of 5,10-methenyltetrahydrofolate to 10-formyltetrahydrofolate. In Pseudomonas fluorescens (strain ATCC BAA-477 / NRRL B-23932 / Pf-5), this protein is Bifunctional protein FolD.